The chain runs to 208 residues: UPF0323 lipoprotein HH_0014 (208 aa).

The N-terminal stretch at 1–26 is a signal peptide; the sequence is MKHIHKIKNYAMVGGLGVMAVFALNA. C27 carries the N-palmitoyl cysteine lipid modification. Residue C27 is the site of S-diacylglycerol cysteine attachment. A disordered region spans residues 148-208; sequence ANSQRNYKSP…TNRNTGSMGS (61 aa). Composition is skewed to low complexity over residues 169-185 and 193-208; these read SAKT…SGKS and SSQS…SMGS.

The protein belongs to the UPF0323 family.

Its subcellular location is the cell membrane. The sequence is that of UPF0323 lipoprotein HH_0014 from Helicobacter hepaticus (strain ATCC 51449 / 3B1).